The primary structure comprises 99 residues: Aspartyl/glutamyl-tRNA(Asn/Gln) amidotransferase subunit C (99 aa).

The protein belongs to the GatC family. In terms of assembly, heterotrimer of A, B and C subunits.

The enzyme catalyses L-glutamyl-tRNA(Gln) + L-glutamine + ATP + H2O = L-glutaminyl-tRNA(Gln) + L-glutamate + ADP + phosphate + H(+). The catalysed reaction is L-aspartyl-tRNA(Asn) + L-glutamine + ATP + H2O = L-asparaginyl-tRNA(Asn) + L-glutamate + ADP + phosphate + 2 H(+). Functionally, allows the formation of correctly charged Asn-tRNA(Asn) or Gln-tRNA(Gln) through the transamidation of misacylated Asp-tRNA(Asn) or Glu-tRNA(Gln) in organisms which lack either or both of asparaginyl-tRNA or glutaminyl-tRNA synthetases. The reaction takes place in the presence of glutamine and ATP through an activated phospho-Asp-tRNA(Asn) or phospho-Glu-tRNA(Gln). The polypeptide is Aspartyl/glutamyl-tRNA(Asn/Gln) amidotransferase subunit C (Methylibium petroleiphilum (strain ATCC BAA-1232 / LMG 22953 / PM1)).